The primary structure comprises 1317 residues: DNA-directed RNA polymerase subunit beta' (1317 aa).

Cysteine 214, cysteine 286, cysteine 293, and cysteine 296 together coordinate Zn(2+). Residues 1279 to 1317 are disordered; the sequence is RAYAGTQLSQDDEEFEETYDTDEDDFDMDDDDDFGDDED. The segment covering 1288–1317 has biased composition (acidic residues); sequence QDDEEFEETYDTDEDDFDMDDDDDFGDDED.

This sequence belongs to the RNA polymerase beta' chain family. RpoC2 subfamily. In terms of assembly, in cyanobacteria the RNAP catalytic core is composed of 2 alpha, 1 beta, 1 beta', 1 gamma and 1 omega subunit. When a sigma factor is associated with the core the holoenzyme is formed, which can initiate transcription. Zn(2+) serves as cofactor.

The catalysed reaction is RNA(n) + a ribonucleoside 5'-triphosphate = RNA(n+1) + diphosphate. In terms of biological role, DNA-dependent RNA polymerase catalyzes the transcription of DNA into RNA using the four ribonucleoside triphosphates as substrates. This is DNA-directed RNA polymerase subunit beta' from Synechocystis sp. (strain ATCC 27184 / PCC 6803 / Kazusa).